We begin with the raw amino-acid sequence, 182 residues long: Aralkylamine dehydrogenase light chain (182 aa).

The tat-type signal signal peptide spans 1 to 47; sequence MRWLDKFGESLSRSVAHKTSRRSVLRSVGKLMVGSAFVLPVLPVARA. 7 cysteine pairs are disulfide-bonded: Cys75–Cys140, Cys81–Cys113, Cys88–Cys171, Cys90–Cys138, Cys91–Cys135, Cys98–Cys129, and Cys130–Cys161. Asp84 lines the substrate pocket. Trp109 serves as the catalytic Tryptophylquinone 6'-substrate hemiaminal intermediate. Trp109 is modified (tryptophylquinone). A cross-link (tryptophan tryptophylquinone (Trp-Trp)) is located at residues 109–160; sequence WIGTCHNPHDGKDYLISYHDCCGKTACGRCQCNTQTRERPGYEFFLHNDVNW. Asp128 functions as the Proton acceptor in the catalytic mechanism. 156-158 provides a ligand contact to substrate; it reads NDV.

It belongs to the aromatic amine dehydrogenase light chain family. As to quaternary structure, heterotetramer of two light and two heavy chains. Binds two azurin molecules per heterotetramer. It depends on tryptophan tryptophylquinone residue as a cofactor. Post-translationally, tryptophan tryptophylquinone (TTQ) is formed by oxidation of the indole ring of a tryptophan to form tryptophylquinone followed by covalent cross-linking with another tryptophan residue. In terms of processing, predicted to be exported by the Tat system. The position of the signal peptide cleavage has been experimentally proven.

The protein localises to the periplasm. It carries out the reaction an aralkylamine + 2 oxidized [azurin] + H2O = an aromatic aldehyde + 2 reduced [azurin] + NH4(+) + 2 H(+). With respect to regulation, irreversibly inhibited by phenylhydrazine, hydroxylamine, semicarbazide, hydrazine and aminoguanidine. Reversibly inhibited by isonicotinic acid hydrazide (isoniazid) and isonicotinic acid 2-isopropyl hydrazide (iproniazid). Oxidizes primary aromatic amines and, more slowly, some long-chain aliphatic amines, but not methylamine or ethylamine. Uses azurin as an electron acceptor to transfer electrons from the reduced tryptophylquinone cofactor. The chain is Aralkylamine dehydrogenase light chain from Alcaligenes faecalis.